Consider the following 257-residue polypeptide: Acetylglutamate kinase (257 aa).

Substrate-binding positions include 43–44 (GG), Arg65, and Asn157.

This sequence belongs to the acetylglutamate kinase family. ArgB subfamily.

It localises to the cytoplasm. It catalyses the reaction N-acetyl-L-glutamate + ATP = N-acetyl-L-glutamyl 5-phosphate + ADP. It participates in amino-acid biosynthesis; L-arginine biosynthesis; N(2)-acetyl-L-ornithine from L-glutamate: step 2/4. Its function is as follows. Catalyzes the ATP-dependent phosphorylation of N-acetyl-L-glutamate. The chain is Acetylglutamate kinase from Pasteurella multocida (strain Pm70).